The chain runs to 892 residues: Alanine--tRNA ligase (892 aa).

Zn(2+) contacts are provided by His574, His578, Cys677, and His681.

The protein belongs to the class-II aminoacyl-tRNA synthetase family. It depends on Zn(2+) as a cofactor.

The protein resides in the cytoplasm. It catalyses the reaction tRNA(Ala) + L-alanine + ATP = L-alanyl-tRNA(Ala) + AMP + diphosphate. Its function is as follows. Catalyzes the attachment of alanine to tRNA(Ala) in a two-step reaction: alanine is first activated by ATP to form Ala-AMP and then transferred to the acceptor end of tRNA(Ala). Also edits incorrectly charged Ser-tRNA(Ala) and Gly-tRNA(Ala) via its editing domain. This is Alanine--tRNA ligase from Mesoplasma florum (strain ATCC 33453 / NBRC 100688 / NCTC 11704 / L1) (Acholeplasma florum).